A 195-amino-acid chain; its full sequence is Probable GTP-binding protein EngB (195 aa).

Positions 24–195 (DWPEIALAGR…EAWTAILKYL (172 aa)) constitute an EngB-type G domain. Residues 32 to 39 (GRSNVGKS), 59 to 63 (GKTQL), 77 to 80 (DVPG), 144 to 147 (TKAD), and 176 to 178 (FSS) contribute to the GTP site. 2 residues coordinate Mg(2+): Ser-39 and Thr-61.

The protein belongs to the TRAFAC class TrmE-Era-EngA-EngB-Septin-like GTPase superfamily. EngB GTPase family. The cofactor is Mg(2+).

Necessary for normal cell division and for the maintenance of normal septation. This Lactococcus lactis subsp. cremoris (strain MG1363) protein is Probable GTP-binding protein EngB.